The chain runs to 241 residues: Pyridoxine 5'-phosphate synthase (241 aa).

Residue Asn-7 participates in 3-amino-2-oxopropyl phosphate binding. 9 to 10 (DH) provides a ligand contact to 1-deoxy-D-xylulose 5-phosphate. Arg-18 is a 3-amino-2-oxopropyl phosphate binding site. Residue His-43 is the Proton acceptor of the active site. 1-deoxy-D-xylulose 5-phosphate contacts are provided by Arg-45 and His-50. The Proton acceptor role is filled by Glu-70. A 1-deoxy-D-xylulose 5-phosphate-binding site is contributed by Thr-100. Catalysis depends on His-191, which acts as the Proton donor. 3-amino-2-oxopropyl phosphate is bound by residues Gly-192 and 213–214 (GH).

Belongs to the PNP synthase family. As to quaternary structure, homooctamer; tetramer of dimers.

It is found in the cytoplasm. It catalyses the reaction 3-amino-2-oxopropyl phosphate + 1-deoxy-D-xylulose 5-phosphate = pyridoxine 5'-phosphate + phosphate + 2 H2O + H(+). Its pathway is cofactor biosynthesis; pyridoxine 5'-phosphate biosynthesis; pyridoxine 5'-phosphate from D-erythrose 4-phosphate: step 5/5. Functionally, catalyzes the complicated ring closure reaction between the two acyclic compounds 1-deoxy-D-xylulose-5-phosphate (DXP) and 3-amino-2-oxopropyl phosphate (1-amino-acetone-3-phosphate or AAP) to form pyridoxine 5'-phosphate (PNP) and inorganic phosphate. The protein is Pyridoxine 5'-phosphate synthase of Acidithiobacillus ferrooxidans (strain ATCC 23270 / DSM 14882 / CIP 104768 / NCIMB 8455) (Ferrobacillus ferrooxidans (strain ATCC 23270)).